Consider the following 287-residue polypeptide: Acetyl-coenzyme A carboxylase carboxyl transferase subunit beta (287 aa).

One can recognise a CoA carboxyltransferase N-terminal domain in the interval 25–287 (VWTKCSACEQ…KMLNTHVIEE (263 aa)). Zn(2+)-binding residues include Cys29, Cys32, Cys48, and Cys51. The C4-type zinc finger occupies 29–51 (CSACEQVLYRAELERNLEVCPKC).

Belongs to the AccD/PCCB family. As to quaternary structure, acetyl-CoA carboxylase is a heterohexamer composed of biotin carboxyl carrier protein (AccB), biotin carboxylase (AccC) and two subunits each of ACCase subunit alpha (AccA) and ACCase subunit beta (AccD). It depends on Zn(2+) as a cofactor.

Its subcellular location is the cytoplasm. It carries out the reaction N(6)-carboxybiotinyl-L-lysyl-[protein] + acetyl-CoA = N(6)-biotinyl-L-lysyl-[protein] + malonyl-CoA. It functions in the pathway lipid metabolism; malonyl-CoA biosynthesis; malonyl-CoA from acetyl-CoA: step 1/1. In terms of biological role, component of the acetyl coenzyme A carboxylase (ACC) complex. Biotin carboxylase (BC) catalyzes the carboxylation of biotin on its carrier protein (BCCP) and then the CO(2) group is transferred by the transcarboxylase to acetyl-CoA to form malonyl-CoA. This chain is Acetyl-coenzyme A carboxylase carboxyl transferase subunit beta, found in Aeromonas salmonicida (strain A449).